We begin with the raw amino-acid sequence, 87 residues long: Small archaeal modifier protein 1 (87 aa).

Glycine 87 is subject to 1-thioglycine; alternate. At glycine 87 the chain carries Glycyl adenylate; alternate. Glycine 87 is covalently cross-linked (Glycyl lysine isopeptide (Gly-Lys) (interchain with K-? in acceptor proteins); alternate).

The C-terminal glycine is likely acyl-adenylated (-COAMP) by UbaA, and also probably thiocarboxylated (-COSH) to function in sulfur transfer.

Functionally, functions as a protein modifier covalently attached to lysine residues of substrate proteins, as well as a sulfur carrier in molybdenum cofactor (MoCo) biosynthesis. The protein modification process is termed sampylation and involves the formation of an isopeptide bond between the SAMP1 C-terminal glycine carboxylate and the epsilon-amino group of lysine residues on target proteins. May serve as a proteolytic signal in the cell to target proteins for degradation by proteasomes. This Haloferax volcanii (strain ATCC 29605 / DSM 3757 / JCM 8879 / NBRC 14742 / NCIMB 2012 / VKM B-1768 / DS2) (Halobacterium volcanii) protein is Small archaeal modifier protein 1 (samp1).